Here is a 507-residue protein sequence, read N- to C-terminus: MEELQRYFKMDRSQKRDFLYPLLFQEYIYALAHDFGLTKLIPYESMQILSYENKYSSLIVKRLIIRMYQQKHLIIFDNDSKKKKFLGHNKNLYSQMISEGFAXIVKIPFALRLVSSYQGKEIEKSINLGSIHSTFPFLEDKFVHLNHVLDVLIPYPIHFELLVQNLRCWIQDASFLHLLRFFLYEYHNWNSFTTQKMKQNSLFFKENRRFFLFLYNFHVYESESIFLFLRKKSYHLRSISSIAFLDRTHFFGKIEHLKVVFRNDFHTMLWLFKDPFMHYFRYQGKSIMSSKGTPLLMKKWKYYLVNLWECHFYFWSQPNRIHINQLSNHFLNFLGYLSSVRPNPSVVRNQMLENAFIIDIAINKLNTLVPIIPLIGSLAKAKFCNLSGQSISKPAWTDSLDSDIIERFGRICRNFSHYYSGSSKKKPLYRIKYILRLSCARTLARKHKSTVRSFLKRLGSEFLEEFLIEEELVLSFILPKISSSSHRLSKERIWYFDIIRINDLMNL.

The protein belongs to the intron maturase 2 family. MatK subfamily.

The protein localises to the plastid. Its subcellular location is the chloroplast. Its function is as follows. Usually encoded in the trnK tRNA gene intron. Probably assists in splicing its own and other chloroplast group II introns. In Ranunculus acris (Meadow buttercup), this protein is Maturase K.